The sequence spans 429 residues: Ribosomal RNA small subunit methyltransferase B (429 aa).

S-adenosyl-L-methionine contacts are provided by residues 254-260 (CAAPGGK), aspartate 277, aspartate 303, and aspartate 322. Cysteine 375 (nucleophile) is an active-site residue.

Belongs to the class I-like SAM-binding methyltransferase superfamily. RsmB/NOP family.

The protein resides in the cytoplasm. It catalyses the reaction cytidine(967) in 16S rRNA + S-adenosyl-L-methionine = 5-methylcytidine(967) in 16S rRNA + S-adenosyl-L-homocysteine + H(+). In terms of biological role, specifically methylates the cytosine at position 967 (m5C967) of 16S rRNA. This chain is Ribosomal RNA small subunit methyltransferase B, found in Escherichia coli (strain UTI89 / UPEC).